Consider the following 181-residue polypeptide: Bradykinin potentiating and C-type natriuretic peptides (181 aa).

The first 23 residues, 1 to 23 (MFVSRLAASGLLLLALLAVSLDG), serve as a signal peptide directing secretion. A propeptide spanning residues 24 to 27 (KPLQ) is cleaved from the precursor. 2 positions are modified to pyrrolidone carboxylic acid: glutamine 28 and glutamine 31. A propeptide spanning residues 41 to 43 (LVV) is cleaved from the precursor. Glutamine 44 carries the post-translational modification Pyrrolidone carboxylic acid. Residues 50 to 52 (TQL) constitute a propeptide that is removed on maturation. The residue at position 53 (glutamine 53) is a Pyrrolidone carboxylic acid. A propeptide spanning residues 59–159 (AGGTTALREE…ARRLKGLAKK (101 aa)) is cleaved from the precursor. The tract at residues 74–150 (EAALDTPPAG…GGGCGGGGGA (77 aa)) is disordered. Low complexity predominate over residues 104 to 114 (SKGASATSAAS). Positions 140–150 (AGGGCGGGGGA) are enriched in gly residues. Residues cysteine 165 and cysteine 181 are joined by a disulfide bond.

In the N-terminal section; belongs to the bradykinin-potentiating peptide family. It in the C-terminal section; belongs to the natriuretic peptide family. As to expression, venom gland.

The protein resides in the secreted. Its function is as follows. Bradykinin-potentiating peptide both inhibits the activity of the angiotensin-converting enzyme (ACE) and enhances the action of bradykinin by inhibiting the peptidases that inactivate it. It acts as an indirect hypotensive agent. Synthetic Cdt1a, Cdt1b and the short hexapeptide Cdt3 are able to potentiate the hypotensive effect mediated by Bk on the blood pressure of anesthetized rats. In terms of biological role, has a vasorelaxant activity in rat aortic strips and a diuretic potency in anesthetized rats. May act by activating natriuretic receptors (NPR1 and/or NPR2). This chain is Bradykinin potentiating and C-type natriuretic peptides, found in Crotalus durissus terrificus (South American rattlesnake).